The sequence spans 471 residues: MAMEKDLSPNSPRIRKLRDTSYPTTPTSRMNTNNQRDNHYPNIPNSPRDYNYTPSSPTARIRHRRRSSENLAEVNRSNVSRVSNLLLGDKNKYRSMWIRTCSSLWMLGGVVFIIYMGHLYIWAMVVVIQIFMAKELFFLRRRAHEERRLPGFWLLNWHFFFTAMLFVYGRIIQQQLVNTVSSDRFIYKLVSGLIKYQMVICYFLYIAGLIWFILTLKNKMYKYQFGQYAWTHMILIVVFTQSSFTVANIFEGIFWFLLPAALIAMNDVAAYFFGFYFGKTPLIKLSPKKTWEGFIGASVATIISAFIFANVLGQFQWLTCPRKDLSTGWLHCDPGPLFRPEYYPFPSWITPFSPWKGISTLPVQWHAFSLGLFASIMAPFGGFFASGFKRAFKIKDFGDSIPGHGGFTDRMDCQMVMAVFAYIYIQSFIVNRDYSVEMILDQISRSLGHEEQKMLYEKLGDILQHKLQGRF.

The segment at Met1–Ala72 is disordered. Positions Ser21–Gln35 are enriched in polar residues. 8 helical membrane-spanning segments follow: residues Trp97–Met116, Tyr120–Leu139, Leu149–Gly169, Tyr196–Leu216, Tyr228–Phe250, Trp255–Phe277, Gly293–Gly313, and Phe368–Phe388.

It belongs to the CDS family. The cofactor is Mg(2+).

The protein localises to the membrane. The catalysed reaction is a 1,2-diacyl-sn-glycero-3-phosphate + CTP + H(+) = a CDP-1,2-diacyl-sn-glycerol + diphosphate. Its pathway is phospholipid metabolism; CDP-diacylglycerol biosynthesis; CDP-diacylglycerol from sn-glycerol 3-phosphate: step 3/3. In terms of biological role, may be involved in the synthesis of minor phospholipids and in modulation of IP3-mediated signal transduction. This chain is Phosphatidate cytidylyltransferase 3, found in Arabidopsis thaliana (Mouse-ear cress).